The sequence spans 86 residues: 4-hydroxyphenylacetate decarboxylase small subunit (86 aa).

[4Fe-4S] cluster-binding residues include His3, Cys6, Cys19, Cys36, Cys45, Cys48, Cys62, and Cys80.

Belongs to the HPA decarboxylase small subunit family. As to quaternary structure, heterooctamer consisting of 4 large (HpdB) subunits and 4 small (HpdC) subunits, arranged as a tetramer of heterodimers. Requires [4Fe-4S] cluster as cofactor.

It carries out the reaction 4-hydroxyphenylacetate + H(+) = 4-methylphenol + CO2. It catalyses the reaction 3,4-dihydroxyphenylacetate + H(+) = 4-methylcatechol + CO2. Its function is as follows. Component of the HPA decarboxylase that decarboxylates phenylacetates with a hydroxyl group in the p-position. Active toward 4-hydroxyphenylacetate and 3,4-dihydroxyphenylacetate, forming 4-methylphenol and 4-methylcatechol, respectively. Is likely involved in the catabolism of aromatic amino acids such as tyrosine fermentation. 4-methylphenol (p-cresol) formation provides metabolic toxicity, which allows an active suppression of other microbes and may provide growth advantages for the producers in highly competitive environments. The small subunit is essential for enzymatic activity of HPA decarboxylase, and also seems to be involved in the regulation of the enzyme oligomeric state and catalytic activity. This chain is 4-hydroxyphenylacetate decarboxylase small subunit, found in Clostridium scatologenes.